The chain runs to 81 residues: Defensin-like protein 45 (81 aa).

An N-terminal signal peptide occupies residues 1-27 (MAITKTSATFVLLIILAASLSNFNVLA). 4 cysteine pairs are disulfide-bonded: C40-C79, C44-C67, C53-C77, and C57-C78.

Belongs to the DEFL family.

The protein resides in the secreted. In Arabidopsis thaliana (Mouse-ear cress), this protein is Defensin-like protein 45.